A 483-amino-acid polypeptide reads, in one-letter code: Glutamyl-tRNA(Gln) amidotransferase subunit A (483 aa).

Catalysis depends on charge relay system residues Lys-76 and Ser-151. The Acyl-ester intermediate role is filled by Ser-175.

Belongs to the amidase family. GatA subfamily. As to quaternary structure, heterotrimer of A, B and C subunits.

It carries out the reaction L-glutamyl-tRNA(Gln) + L-glutamine + ATP + H2O = L-glutaminyl-tRNA(Gln) + L-glutamate + ADP + phosphate + H(+). Its function is as follows. Allows the formation of correctly charged Gln-tRNA(Gln) through the transamidation of misacylated Glu-tRNA(Gln) in organisms which lack glutaminyl-tRNA synthetase. The reaction takes place in the presence of glutamine and ATP through an activated gamma-phospho-Glu-tRNA(Gln). This Pseudomonas putida (strain ATCC 700007 / DSM 6899 / JCM 31910 / BCRC 17059 / LMG 24140 / F1) protein is Glutamyl-tRNA(Gln) amidotransferase subunit A.